The chain runs to 29 residues: Small ribosomal subunit protein uS7 (29 aa).

Residues 1-29 form a disordered region; it reads ELIGAANRDTKSFSINRKDAKERVAKAAR. The segment covering 8–29 has biased composition (basic and acidic residues); sequence RDTKSFSINRKDAKERVAKAAR.

The protein belongs to the universal ribosomal protein uS7 family. As to quaternary structure, part of the 30S ribosomal subunit.

Functionally, one of the primary rRNA binding proteins, it binds directly to 16S rRNA where it nucleates assembly of the head domain of the 30S subunit. Is located at the subunit interface close to the decoding center. The polypeptide is Small ribosomal subunit protein uS7 (rps7) (Methanosarcina thermophila).